The primary structure comprises 63 residues: Conotoxin PnMRCL-0111 (63 aa).

The N-terminal stretch at 1-22 (MHCLSVFVILLLLTASAPSVDA) is a signal peptide. Residues 23 to 50 (QPKTEDDVPLSSFHDDLQRTVRTLLDIR) constitute a propeptide that is removed on maturation. The residue at position 62 (Trp-62) is a Tryptophan amide.

The protein belongs to the conotoxin T superfamily. In terms of processing, contains 2 disulfide bonds that can be either 'C1-C3, C2-C4' or 'C1-C4, C2-C3', since these disulfide connectivities have been observed for conotoxins with cysteine framework V (for examples, see AC P0DQQ7 and AC P81755). In terms of tissue distribution, expressed by the venom duct.

The protein resides in the secreted. This is Conotoxin PnMRCL-0111 from Conus pennaceus (Feathered cone).